The primary structure comprises 394 residues: Shematrin-like protein 2 (394 aa).

The N-terminal stretch at 1-19 (MKPFISLASLIVLIASASA) is a signal peptide.

In terms of tissue distribution, prismatic layer of shell (at protein level). Expressed primarily in the mantle with highest level in the mantle edge and lower level in the mantle pallium.

The protein localises to the secreted. The polypeptide is Shematrin-like protein 2 (Pinctada maxima (Silver-lipped pearl oyster)).